The primary structure comprises 315 residues: GTP cyclohydrolase MptA (315 aa).

Belongs to the GTP cyclohydrolase IV family. In terms of assembly, homodimer. Requires Fe(2+) as cofactor.

The catalysed reaction is GTP + H2O = 7,8-dihydroneopterin 2',3'-cyclic phosphate + formate + diphosphate + H(+). It functions in the pathway cofactor biosynthesis; 5,6,7,8-tetrahydromethanopterin biosynthesis. In terms of biological role, converts GTP to 7,8-dihydro-D-neopterin 2',3'-cyclic phosphate, the first intermediate in the biosynthesis of coenzyme methanopterin. The sequence is that of GTP cyclohydrolase MptA from Methanococcus maripaludis (strain C7 / ATCC BAA-1331).